A 304-amino-acid chain; its full sequence is Putative S-adenosyl-L-methionine-dependent methyltransferase MAV_1058 (304 aa).

Residues aspartate 128 and 157–158 each bind S-adenosyl-L-methionine; that span reads DL.

Belongs to the UPF0677 family.

Exhibits S-adenosyl-L-methionine-dependent methyltransferase activity. The protein is Putative S-adenosyl-L-methionine-dependent methyltransferase MAV_1058 of Mycobacterium avium (strain 104).